Reading from the N-terminus, the 61-residue chain is MAKKSMIAKNKRPAKHSTQAYTRCEKCGRPHSVYRKFKLCRVCFRELAYKGQIPGVVKASW.

Zn(2+)-binding residues include C24, C27, C40, and C43.

Belongs to the universal ribosomal protein uS14 family. Zinc-binding uS14 subfamily. Part of the 30S ribosomal subunit. Contacts proteins S3 and S10. The cofactor is Zn(2+).

Its function is as follows. Binds 16S rRNA, required for the assembly of 30S particles and may also be responsible for determining the conformation of the 16S rRNA at the A site. This is Small ribosomal subunit protein uS14B from Streptococcus pyogenes serotype M6 (strain ATCC BAA-946 / MGAS10394).